The chain runs to 163 residues: Lipoprotein signal peptidase (163 aa).

A run of 3 helical transmembrane segments spans residues 11-31 (ILIAVFVVIFDQVTKYIIATT), 63-83 (KMTFFFIITIIILIALVYFFI), and 88-108 (YNLFMQVAISLLFAGALGNFI). Active-site residues include D118 and D136. The chain crosses the membrane as a helical span at residues 131–151 (IFNIADSSLTIGVILIIIALL).

It belongs to the peptidase A8 family.

It localises to the cell membrane. The catalysed reaction is Release of signal peptides from bacterial membrane prolipoproteins. Hydrolyzes -Xaa-Yaa-Zaa-|-(S,diacylglyceryl)Cys-, in which Xaa is hydrophobic (preferably Leu), and Yaa (Ala or Ser) and Zaa (Gly or Ala) have small, neutral side chains.. It participates in protein modification; lipoprotein biosynthesis (signal peptide cleavage). In terms of biological role, this protein specifically catalyzes the removal of signal peptides from prolipoproteins. The chain is Lipoprotein signal peptidase from Staphylococcus aureus (strain Mu3 / ATCC 700698).